The primary structure comprises 230 residues: Large ribosomal subunit protein uL3 (230 aa).

Disordered regions lie at residues Gln-125–Asp-149 and Pro-210–Glu-230.

This sequence belongs to the universal ribosomal protein uL3 family. Part of the 50S ribosomal subunit. Forms a cluster with proteins L14 and L19.

One of the primary rRNA binding proteins, it binds directly near the 3'-end of the 23S rRNA, where it nucleates assembly of the 50S subunit. This Mesomycoplasma hyopneumoniae (strain J / ATCC 25934 / NCTC 10110) (Mycoplasma hyopneumoniae) protein is Large ribosomal subunit protein uL3.